A 224-amino-acid polypeptide reads, in one-letter code: Prolactin-3D1 (224 aa).

Positions 1-29 (MQLTLNLSGSAGMQLLLLVSSLLLWENVS) are cleaved as a signal peptide. Intrachain disulfides connect cysteine 81-cysteine 199 and cysteine 216-cysteine 224. N-linked (GlcNAc...) asparagine glycans are attached at residues asparagine 109 and asparagine 158.

This sequence belongs to the somatotropin/prolactin family.

The protein localises to the secreted. In Mus musculus (Mouse), this protein is Prolactin-3D1 (Prl3d1).